The primary structure comprises 416 residues: Gamma-glutamyl phosphate reductase (416 aa).

The protein belongs to the gamma-glutamyl phosphate reductase family.

The protein resides in the cytoplasm. The catalysed reaction is L-glutamate 5-semialdehyde + phosphate + NADP(+) = L-glutamyl 5-phosphate + NADPH + H(+). It functions in the pathway amino-acid biosynthesis; L-proline biosynthesis; L-glutamate 5-semialdehyde from L-glutamate: step 2/2. Catalyzes the NADPH-dependent reduction of L-glutamate 5-phosphate into L-glutamate 5-semialdehyde and phosphate. The product spontaneously undergoes cyclization to form 1-pyrroline-5-carboxylate. The chain is Gamma-glutamyl phosphate reductase from Salmonella arizonae (strain ATCC BAA-731 / CDC346-86 / RSK2980).